Consider the following 343-residue polypeptide: Fructose-1,6-bisphosphatase class 1 (343 aa).

Residues Glu91, Asp113, Ile115, and Asp116 each coordinate Mg(2+). Substrate-binding positions include 116–119 (DGSS), Asn210, and Lys276. Glu282 serves as a coordination point for Mg(2+).

Belongs to the FBPase class 1 family. Homotetramer. It depends on Mg(2+) as a cofactor.

The protein localises to the cytoplasm. It catalyses the reaction beta-D-fructose 1,6-bisphosphate + H2O = beta-D-fructose 6-phosphate + phosphate. It participates in carbohydrate biosynthesis; gluconeogenesis. The chain is Fructose-1,6-bisphosphatase class 1 from Parvibaculum lavamentivorans (strain DS-1 / DSM 13023 / NCIMB 13966).